The following is a 385-amino-acid chain: Chaperone protein DnaJ (385 aa).

Positions aspartate 5–glycine 72 constitute a J domain. Residues arginine 26–lysine 48 form a disordered region. Positions aspartate 35–lysine 48 are enriched in basic and acidic residues. Residues glycine 145–glutamine 223 form a CR-type zinc finger. Zn(2+) contacts are provided by cysteine 158, cysteine 161, cysteine 175, cysteine 178, cysteine 197, cysteine 200, cysteine 211, and cysteine 214. CXXCXGXG motif repeat units follow at residues cysteine 158–glycine 165, cysteine 175–glycine 182, cysteine 197–glycine 204, and cysteine 211–glycine 218. Residues phenylalanine 362–lysine 385 are disordered.

The protein belongs to the DnaJ family. In terms of assembly, homodimer. Requires Zn(2+) as cofactor.

Its subcellular location is the cytoplasm. Participates actively in the response to hyperosmotic and heat shock by preventing the aggregation of stress-denatured proteins and by disaggregating proteins, also in an autonomous, DnaK-independent fashion. Unfolded proteins bind initially to DnaJ; upon interaction with the DnaJ-bound protein, DnaK hydrolyzes its bound ATP, resulting in the formation of a stable complex. GrpE releases ADP from DnaK; ATP binding to DnaK triggers the release of the substrate protein, thus completing the reaction cycle. Several rounds of ATP-dependent interactions between DnaJ, DnaK and GrpE are required for fully efficient folding. Also involved, together with DnaK and GrpE, in the DNA replication of plasmids through activation of initiation proteins. This chain is Chaperone protein DnaJ, found in Leptothrix cholodnii (strain ATCC 51168 / LMG 8142 / SP-6) (Leptothrix discophora (strain SP-6)).